Consider the following 180-residue polypeptide: Interleukin-1-binding protein (180 aa).

Positions 1–20 are cleaved as a signal peptide; that stretch reads MSILPVIFLPIFFYSPFVQT. N-linked (GlcNAc...) asparagine; by host glycosylation is found at N80, N103, and N113.

The protein belongs to the interleukin-1 receptor family. As to quaternary structure, interacts with mouse Il1b.

The protein localises to the secreted. In terms of biological role, may reduce the host inflammatory response by interacting with inteleukin-1 beta (Il1b) and thus decreasing the association between IL1B and its cellular receptor. This is Interleukin-1-binding protein (OPG201) from Monkeypox virus.